The sequence spans 371 residues: Dual-specificity RNA methyltransferase RlmN (371 aa).

The Proton acceptor role is filled by Glu114. The Radical SAM core domain occupies 120 to 352 (EEDHFTLCVS…VMTRQSKGAD (233 aa)). A disulfide bond links Cys127 and Cys357. Positions 134, 138, and 141 each coordinate [4Fe-4S] cluster. Residues 183 to 184 (GE), Ser216, 238 to 240 (SLN), and Asn314 each bind S-adenosyl-L-methionine. Cys357 (S-methylcysteine intermediate) is an active-site residue.

The protein belongs to the radical SAM superfamily. RlmN family. [4Fe-4S] cluster is required as a cofactor.

Its subcellular location is the cytoplasm. It catalyses the reaction adenosine(2503) in 23S rRNA + 2 reduced [2Fe-2S]-[ferredoxin] + 2 S-adenosyl-L-methionine = 2-methyladenosine(2503) in 23S rRNA + 5'-deoxyadenosine + L-methionine + 2 oxidized [2Fe-2S]-[ferredoxin] + S-adenosyl-L-homocysteine. It carries out the reaction adenosine(37) in tRNA + 2 reduced [2Fe-2S]-[ferredoxin] + 2 S-adenosyl-L-methionine = 2-methyladenosine(37) in tRNA + 5'-deoxyadenosine + L-methionine + 2 oxidized [2Fe-2S]-[ferredoxin] + S-adenosyl-L-homocysteine. Specifically methylates position 2 of adenine 2503 in 23S rRNA and position 2 of adenine 37 in tRNAs. m2A2503 modification seems to play a crucial role in the proofreading step occurring at the peptidyl transferase center and thus would serve to optimize ribosomal fidelity. The protein is Dual-specificity RNA methyltransferase RlmN of Desulfosudis oleivorans (strain DSM 6200 / JCM 39069 / Hxd3) (Desulfococcus oleovorans).